Here is a 574-residue protein sequence, read N- to C-terminus: Efflux pump FUB11 (574 aa).

A disordered region spans residues 1–44; that stretch reads MAIDPQPSSPSLSSETIANDTIGNDNNVNEPSVEPKTQEHQHTV. The span at 9–30 shows a compositional bias: polar residues; that stretch reads SPSLSSETIANDTIGNDNNVNE. Residue Asn19 is glycosylated (N-linked (GlcNAc...) asparagine). 11 helical membrane-spanning segments follow: residues 116 to 136, 148 to 168, 176 to 196, 208 to 228, 235 to 255, 318 to 338, 348 to 368, 394 to 414, 419 to 439, 449 to 469, and 484 to 504; these read VATL…LIWA, FFFT…AGSI, FLTG…IADM, MFSG…GFLG, WLHG…TVFI, IYIS…PIVF, IGGL…ISFA, AIMG…TTFA, IVPI…FMAL, IFAA…GAAF, and WASS…FLFY. Positions 552-574 are disordered; sequence HNSHTSATHSHGHRRSLSCTRSV.

This sequence belongs to the major facilitator superfamily. DHA1 family. Polyamines/proton antiporter (TC 2.A.1.2.16) subfamily.

It localises to the cell membrane. Functionally, efflux pump involved in export of fusaric acid, a mycotoxin with low to moderate toxicity to animals and humans, but with high phytotoxic properties. Constitutes a self-protecting mechanism of the fungus against critical levels of fusaric acid within the cell. This chain is Efflux pump FUB11, found in Gibberella fujikuroi (strain CBS 195.34 / IMI 58289 / NRRL A-6831) (Bakanae and foot rot disease fungus).